The chain runs to 132 residues: Binder of sperm protein homolog 1 (132 aa).

The signal sequence occupies residues 1 to 17 (MGSLMLLFVETTRNSSA). Fibronectin type-II domains lie at 40 to 84 (VTDG…FCSA) and 85 to 132 (EDFA…KYCE). 4 disulfide bridges follow: Cys45–Cys69, Cys59–Cys82, Cys90–Cys116, and Cys104–Cys131. Asn53 carries an N-linked (GlcNAc...) asparagine glycan.

It belongs to the seminal plasma protein family. As to expression, expressed only in the epididymis.

Its subcellular location is the secreted. Functionally, binds sperm in vitro and promotes sperm capacitation. Specifically promotes capacitation induced by high density lipoproteins (HDLs). Also binds heparin, phospholipid liposomes, and weakly to gelatin. Does not bind chondroitin sulfate B. In Homo sapiens (Human), this protein is Binder of sperm protein homolog 1 (BSPH1).